A 295-amino-acid chain; its full sequence is MDTEKLMKAGEIAKKVREKAIKLARPGMLLLELAESIEKMIMELGGKPAFPVNLSINEIAAHYTPYKGDTTVLKEGDYLKIDVGVHIDGFIADTAVTVRVGMEEDELMEAAKEALNAAISVARAGVEIKELGKAIENEIRKRGFKPIVNLSGHKIERYKLHAGISIPNIYRPHDNYVLKEGDVFAIEPFATIGAGQVIEVPPTLIYMYVRDVPVRVAQARFLLAKIKREYGTLPFAYRWLQNDMPEGQLKLALKTLEKAGAIYGYPVLKEIRNGIVAQFEHTIIVEKDSVIVTTE.

His-62 provides a ligand contact to substrate. Residues Asp-82, Asp-93, and His-153 each contribute to the a divalent metal cation site. His-161 contacts substrate. Residues Glu-187 and Glu-280 each contribute to the a divalent metal cation site.

Monomer. Co(2+) serves as cofactor. The cofactor is Zn(2+). Requires Mn(2+) as cofactor. Fe(2+) is required as a cofactor.

The catalysed reaction is Release of N-terminal amino acids, preferentially methionine, from peptides and arylamides.. Its function is as follows. Removes the N-terminal methionine from nascent proteins. The N-terminal methionine is often cleaved when the second residue in the primary sequence is small and uncharged (Met-Ala-, Cys, Gly, Pro, Ser, Thr, or Val). The chain is Methionine aminopeptidase from Pyrococcus furiosus (strain ATCC 43587 / DSM 3638 / JCM 8422 / Vc1).